Here is a 229-residue protein sequence, read N- to C-terminus: Potassium/proton antiporter CemA (229 aa).

Helical transmembrane passes span 7–27 (FTPLLYLASIVFLPWWISLSL), 114–134 (IICFVILSGYSILGNEELLIL), 154–174 (ILLLTDLCIGFHSPHGWELMI), and 189–209 (IISGLVSTFPVILDTILKYWI).

The protein belongs to the CemA family.

It localises to the plastid. Its subcellular location is the chloroplast inner membrane. It catalyses the reaction K(+)(in) + H(+)(out) = K(+)(out) + H(+)(in). In terms of biological role, contributes to K(+)/H(+) antiport activity by supporting proton efflux to control proton extrusion and homeostasis in chloroplasts in a light-dependent manner to modulate photosynthesis. Prevents excessive induction of non-photochemical quenching (NPQ) under continuous-light conditions. Indirectly promotes efficient inorganic carbon uptake into chloroplasts. The polypeptide is Potassium/proton antiporter CemA (Vitis vinifera (Grape)).